Consider the following 506-residue polypeptide: Dolabradiene monooxygenase (506 aa).

A helical transmembrane segment spans residues 5 to 25 (VLLAVAMVALIAVLSKLKSLL). Cys443 lines the heme pocket.

It belongs to the cytochrome P450 family. The cofactor is heme.

It is found in the membrane. The enzyme catalyses dolabradiene + reduced [NADPH--hemoprotein reductase] + O2 = 15,16-epoxydolabrene + oxidized [NADPH--hemoprotein reductase] + H2O + H(+). It catalyses the reaction 15,16-epoxydolabrene + reduced [NADPH--hemoprotein reductase] + O2 = 3beta-hydroxy-15,16-epoxydolabrene + oxidized [NADPH--hemoprotein reductase] + H2O + H(+). Functionally, involved in the production of antifungal dolabralexin phytoalexins in response to biotic and abiotic stresses. Catalyzes the epoxidation of dolabradiene at C-16, followed by hydroxylation at C-3, to yield the epoxides 15,16-epoxydolabrene (epoxydolabrene) and 3b-hydroxy-15,16-epoxydolabrene (epoxydolabranol). This Zea mays (Maize) protein is Dolabradiene monooxygenase.